A 210-amino-acid polypeptide reads, in one-letter code: NAD(P)H-quinone oxidoreductase subunit I (210 aa).

4Fe-4S ferredoxin-type domains are found at residues 54-83 (GRIH…VDWA) and 94-123 (YSYS…VTED). C63, C66, C69, C73, C103, C106, C109, and C113 together coordinate [4Fe-4S] cluster.

This sequence belongs to the complex I 23 kDa subunit family. NDH-1 is composed of at least 11 different subunits. It depends on [4Fe-4S] cluster as a cofactor.

The protein resides in the cellular thylakoid membrane. It catalyses the reaction a plastoquinone + NADH + (n+1) H(+)(in) = a plastoquinol + NAD(+) + n H(+)(out). The catalysed reaction is a plastoquinone + NADPH + (n+1) H(+)(in) = a plastoquinol + NADP(+) + n H(+)(out). Functionally, NDH-1 shuttles electrons from an unknown electron donor, via FMN and iron-sulfur (Fe-S) centers, to quinones in the respiratory and/or the photosynthetic chain. The immediate electron acceptor for the enzyme in this species is believed to be plastoquinone. Couples the redox reaction to proton translocation, and thus conserves the redox energy in a proton gradient. In Synechococcus sp. (strain JA-2-3B'a(2-13)) (Cyanobacteria bacterium Yellowstone B-Prime), this protein is NAD(P)H-quinone oxidoreductase subunit I.